A 208-amino-acid polypeptide reads, in one-letter code: Uracil phosphoribosyltransferase (208 aa).

Residues R78, R103, and 130-138 each bind 5-phospho-alpha-D-ribose 1-diphosphate; that span reads DPMLATGGS. Uracil is bound by residues I193 and 198-200; that span reads GDA. Position 199 (D199) interacts with 5-phospho-alpha-D-ribose 1-diphosphate.

It belongs to the UPRTase family. Mg(2+) is required as a cofactor.

It carries out the reaction UMP + diphosphate = 5-phospho-alpha-D-ribose 1-diphosphate + uracil. It functions in the pathway pyrimidine metabolism; UMP biosynthesis via salvage pathway; UMP from uracil: step 1/1. Allosterically activated by GTP. Catalyzes the conversion of uracil and 5-phospho-alpha-D-ribose 1-diphosphate (PRPP) to UMP and diphosphate. This is Uracil phosphoribosyltransferase from Roseiflexus sp. (strain RS-1).